Reading from the N-terminus, the 718-residue chain is Pentatricopeptide repeat-containing protein At1g22960, mitochondrial (718 aa).

The transit peptide at Met-1–Ala-11 directs the protein to the mitochondrion. 15 PPR repeats span residues Ala-167–Pro-201, Ser-202–Pro-236, Thr-237–Phe-271, Ser-272–Val-306, Thr-307–Pro-341, Thr-342–Pro-372, Asp-373–Pro-407, Ser-408–Pro-442, Asp-443–Pro-477, Asp-478–Ala-512, Asp-514–Pro-548, Asp-549–Pro-583, Ser-584–Pro-618, Asn-619–Pro-653, and Asn-654–Pro-688.

It belongs to the PPR family. P subfamily.

The protein localises to the mitochondrion. The polypeptide is Pentatricopeptide repeat-containing protein At1g22960, mitochondrial (Arabidopsis thaliana (Mouse-ear cress)).